The chain runs to 278 residues: 4-deoxy-L-threo-5-hexosulose-uronate ketol-isomerase (278 aa).

Positions 196, 198, 203, and 245 each coordinate Zn(2+).

The protein belongs to the KduI family. As to quaternary structure, homohexamer. It depends on Zn(2+) as a cofactor.

The catalysed reaction is 5-dehydro-4-deoxy-D-glucuronate = 3-deoxy-D-glycero-2,5-hexodiulosonate. It functions in the pathway glycan metabolism; pectin degradation; 2-dehydro-3-deoxy-D-gluconate from pectin: step 4/5. Catalyzes the isomerization of 5-dehydro-4-deoxy-D-glucuronate to 3-deoxy-D-glycero-2,5-hexodiulosonate. The sequence is that of 4-deoxy-L-threo-5-hexosulose-uronate ketol-isomerase from Escherichia coli (strain K12 / MC4100 / BW2952).